Reading from the N-terminus, the 240-residue chain is Cysteine-rich venom protein triflin (240 aa).

A signal peptide spans 1 to 19 (MIAFIVLPILAAVLQQSSG). An SCP domain is found at 39-166 (DLHNSLRRSV…KYSYFYVCQY (128 aa)). 8 disulfides stabilise this stretch: Cys-75–Cys-153, Cys-92–Cys-167, Cys-148–Cys-164, Cys-186–Cys-193, Cys-189–Cys-198, Cys-202–Cys-235, Cys-211–Cys-229, and Cys-220–Cys-233. One can recognise a ShKT domain in the interval 202–235 (CTRENEFTNCDSLVQKSSCQDNYMKSKCPASCFC).

It belongs to the CRISP family. Forms a stable, non-covalent complex with SSP-2. In terms of tissue distribution, expressed by the venom gland.

It is found in the secreted. Blocks contraction of smooth muscle elicited by high potassium-induced depolarization. May target voltage-gated calcium channels (Cav) on smooth muscle. This chain is Cysteine-rich venom protein triflin, found in Protobothrops flavoviridis (Habu).